The sequence spans 615 residues: MQNDNKNTLMFIVSAFAILIGYQFFVLGPQQKKAEAEFRAKKAAEQQSAAKAGVTLDANGNPAPLRLSRDAAKALSPRIEVDTPALSGSIALKGARIDDLFLRKYDETTKKDSPPVELFRPEGAEHAWFADFGWAGANLPGLPDSRTVWTAAPGQVLRPNSPVTLTYDNGLGLTFTRVIAVDDQAMFTVTDSVKNNGTNGLQLAPYATVQRQGISDALGKNQIVHEGAIGVLGATDEQKLEMAKYGKWKKDKPLQSFDSVGGWTGITDKYWLAALIPGQNQAIKAQYRVTNVAGIDVYDVNFLGPVQVLNPGATVSQTTRLFAGAKTVPLLRKYEYGATPAPAIWEFWNKTKAEIPRFDDAVDWGMFRFFTRPIFNILEVFYKLVGNFGLAILLLTVVLKLVLYPMADKSYESMAKMKKIAPEVEKLKAKHKDDPAKQQQEMMALYQKEKINPMMGCLPMLIQIPVFYALYKVLTVTIEMRHAPFFGWIQDLSAPDPTTMFNLFGLIPWDPGSLPLIGAMIAHLGVWPLLYGFTMWLTTAMNPPAGDPIQQKIFQWFPVIFTFTLSGFAVGLVIYWCWSNVLTIFQQYIIMRRYKVENPIDQIIARLRGKTAGAT.

Transmembrane regions (helical) follow at residues 9–29, 384–404, 458–478, 516–536, and 556–576; these read LMFI…VLGP, LVGN…LVLY, LPML…TVTI, LIGA…FTMW, and WFPV…VIYW.

It belongs to the OXA1/ALB3/YidC family. Type 1 subfamily. As to quaternary structure, interacts with the Sec translocase complex via SecD. Specifically interacts with transmembrane segments of nascent integral membrane proteins during membrane integration.

It is found in the cell inner membrane. In terms of biological role, required for the insertion and/or proper folding and/or complex formation of integral membrane proteins into the membrane. Involved in integration of membrane proteins that insert both dependently and independently of the Sec translocase complex, as well as at least some lipoproteins. Aids folding of multispanning membrane proteins. This is Membrane protein insertase YidC from Caulobacter vibrioides (strain ATCC 19089 / CIP 103742 / CB 15) (Caulobacter crescentus).